The primary structure comprises 270 residues: tRNA pseudouridine synthase A (270 aa).

The active-site Nucleophile is the D60. The interval 107–111 (FHARF) is RNA binding. Y118 provides a ligand contact to substrate. Residues 168 to 172 (QCQSR) are interaction with tRNA.

Belongs to the tRNA pseudouridine synthase TruA family. Homodimer.

The enzyme catalyses uridine(38/39/40) in tRNA = pseudouridine(38/39/40) in tRNA. Formation of pseudouridine at positions 38, 39 and 40 in the anticodon stem and loop of transfer RNAs. The sequence is that of tRNA pseudouridine synthase A from Shigella boydii serotype 4 (strain Sb227).